A 308-amino-acid polypeptide reads, in one-letter code: D-alanine--D-alanine ligase (308 aa).

The 198-residue stretch at 105-302 folds into the ATP-grasp domain; sequence KAIFRSLGLA…FPDLCERILD (198 aa). An ATP-binding site is contributed by 133–188; it reads DLPFGLPCVVKPAGEGSSVGVHLVNEAAELGPACRDAASHAGDVIVERYVKGTEVD. Mg(2+)-binding residues include Asp-256, Glu-269, and Asn-271.

Belongs to the D-alanine--D-alanine ligase family. Mg(2+) serves as cofactor. Mn(2+) is required as a cofactor.

It localises to the cytoplasm. The enzyme catalyses 2 D-alanine + ATP = D-alanyl-D-alanine + ADP + phosphate + H(+). The protein operates within cell wall biogenesis; peptidoglycan biosynthesis. Cell wall formation. This Anaeromyxobacter sp. (strain K) protein is D-alanine--D-alanine ligase.